Consider the following 489-residue polypeptide: Ataxin-10 homolog (489 aa).

It belongs to the ataxin-10 family.

The protein localises to the cytoplasm. Its function is as follows. May play a role in the regulation of cytokinesis. In Debaryomyces hansenii (strain ATCC 36239 / CBS 767 / BCRC 21394 / JCM 1990 / NBRC 0083 / IGC 2968) (Yeast), this protein is Ataxin-10 homolog (CTR86).